A 143-amino-acid chain; its full sequence is Interleukin-3 (143 aa).

The N-terminal stretch at 1 to 23 (MSSFPILHLLLLLLGCQVPQAQG) is a signal peptide. Asparagine 79 is a glycosylation site (N-linked (GlcNAc...) asparagine).

It belongs to the IL-3 family. In terms of assembly, monomer.

It localises to the secreted. Granulocyte/macrophage colony-stimulating factors are cytokines that act in hematopoiesis by controlling the production, differentiation, and function of 2 related white cell populations of the blood, the granulocytes and the monocytes-macrophages. In terms of biological role, this CSF induces granulocytes, macrophages, mast cells, stem cells, erythroid cells, eosinophils and megakaryocytes. The polypeptide is Interleukin-3 (IL3) (Canis lupus familiaris (Dog)).